Consider the following 160-residue polypeptide: S-ribosylhomocysteine lyase (160 aa).

3 residues coordinate Fe cation: His-57, His-61, and Cys-127.

The protein belongs to the LuxS family. Homodimer. Fe cation is required as a cofactor.

The catalysed reaction is S-(5-deoxy-D-ribos-5-yl)-L-homocysteine = (S)-4,5-dihydroxypentane-2,3-dione + L-homocysteine. Functionally, involved in the synthesis of autoinducer 2 (AI-2) which is secreted by bacteria and is used to communicate both the cell density and the metabolic potential of the environment. The regulation of gene expression in response to changes in cell density is called quorum sensing. Catalyzes the transformation of S-ribosylhomocysteine (RHC) to homocysteine (HC) and 4,5-dihydroxy-2,3-pentadione (DPD). This is S-ribosylhomocysteine lyase from Streptococcus pneumoniae (strain CGSP14).